A 380-amino-acid chain; its full sequence is Cytochrome b (380 aa).

A run of 4 helical transmembrane segments spans residues 34–54, 78–99, 114–134, and 179–199; these read FGSLLGICLATQILTGLLLAA, WLIRNLHANGASFFFICIYLHI, WNTGVILLLTLMATAFVGYVL, and FFTLHFLLPFMIMGLTLIHLT. Heme b-binding residues include histidine 84 and histidine 98. Heme b contacts are provided by histidine 183 and histidine 197. Histidine 202 lines the a ubiquinone pocket. Helical transmembrane passes span 227–247, 289–309, 321–341, and 348–368; these read LKDILGFMLMLLPLMTLALFS, LGGVLALAASVLILFLAPLLH, FSQLLFWTLTANVLILTWVGS, and FIIIGQLASLTYFTILLILFP.

Belongs to the cytochrome b family. In terms of assembly, the cytochrome bc1 complex contains 11 subunits: 3 respiratory subunits (MT-CYB, CYC1 and UQCRFS1), 2 core proteins (UQCRC1 and UQCRC2) and 6 low-molecular weight proteins (UQCRH/QCR6, UQCRB/QCR7, UQCRQ/QCR8, UQCR10/QCR9, UQCR11/QCR10 and a cleavage product of UQCRFS1). This cytochrome bc1 complex then forms a dimer. It depends on heme b as a cofactor.

It is found in the mitochondrion inner membrane. Component of the ubiquinol-cytochrome c reductase complex (complex III or cytochrome b-c1 complex) that is part of the mitochondrial respiratory chain. The b-c1 complex mediates electron transfer from ubiquinol to cytochrome c. Contributes to the generation of a proton gradient across the mitochondrial membrane that is then used for ATP synthesis. The chain is Cytochrome b (MT-CYB) from Bugeranus carunculatus (Wattled crane).